The primary structure comprises 204 residues: Thiamine-phosphate synthase (204 aa).

Residues 34-38 and D66 contribute to the 4-amino-2-methyl-5-(diphosphooxymethyl)pyrimidine site; that span reads QYRDK. Mg(2+)-binding residues include D67 and D86. Position 104 (S104) interacts with 4-amino-2-methyl-5-(diphosphooxymethyl)pyrimidine. A 2-[(2R,5Z)-2-carboxy-4-methylthiazol-5(2H)-ylidene]ethyl phosphate-binding site is contributed by 131–133; that stretch reads TST. K134 is a 4-amino-2-methyl-5-(diphosphooxymethyl)pyrimidine binding site. 2-[(2R,5Z)-2-carboxy-4-methylthiazol-5(2H)-ylidene]ethyl phosphate contacts are provided by residues G160 and 180–181; that span reads VS.

It belongs to the thiamine-phosphate synthase family. Mg(2+) is required as a cofactor.

The catalysed reaction is 2-[(2R,5Z)-2-carboxy-4-methylthiazol-5(2H)-ylidene]ethyl phosphate + 4-amino-2-methyl-5-(diphosphooxymethyl)pyrimidine + 2 H(+) = thiamine phosphate + CO2 + diphosphate. It catalyses the reaction 2-(2-carboxy-4-methylthiazol-5-yl)ethyl phosphate + 4-amino-2-methyl-5-(diphosphooxymethyl)pyrimidine + 2 H(+) = thiamine phosphate + CO2 + diphosphate. The enzyme catalyses 4-methyl-5-(2-phosphooxyethyl)-thiazole + 4-amino-2-methyl-5-(diphosphooxymethyl)pyrimidine + H(+) = thiamine phosphate + diphosphate. It functions in the pathway cofactor biosynthesis; thiamine diphosphate biosynthesis; thiamine phosphate from 4-amino-2-methyl-5-diphosphomethylpyrimidine and 4-methyl-5-(2-phosphoethyl)-thiazole: step 1/1. Functionally, condenses 4-methyl-5-(beta-hydroxyethyl)thiazole monophosphate (THZ-P) and 2-methyl-4-amino-5-hydroxymethyl pyrimidine pyrophosphate (HMP-PP) to form thiamine monophosphate (TMP). The protein is Thiamine-phosphate synthase of Picrophilus torridus (strain ATCC 700027 / DSM 9790 / JCM 10055 / NBRC 100828 / KAW 2/3).